Consider the following 264-residue polypeptide: Signal peptidase I (264 aa).

The Cytoplasmic segment spans residues 1-18 (MNRDNINSNKTVKQEFGS). A helical transmembrane segment spans residues 19–39 (FAFVICIALVIRILIMEPFTV). Topologically, residues 40-264 (PTGSMKATIL…IFKNLYNVDE (225 aa)) are extracellular. Active-site residues include Ser-43 and Lys-106.

The protein belongs to the peptidase S26 family.

The protein localises to the cell membrane. The catalysed reaction is Cleavage of hydrophobic, N-terminal signal or leader sequences from secreted and periplasmic proteins.. The protein is Signal peptidase I (lepB) of Rickettsia prowazekii (strain Madrid E).